Here is a 354-residue protein sequence, read N- to C-terminus: Trans-enoyl reductase pydC (354 aa).

The Enoyl reductase (ER) domain maps to 16–342; the sequence is ANTDPVTFEI…RREVSGEKIV (327 aa). Residues 51-54, 180-183, Y198, 245-246, and 336-337 each bind NADP(+); these read CDYK, SPKN, FE, and VS.

The protein belongs to the zinc-containing alcohol dehydrogenase family. Monomer.

The protein operates within mycotoxin biosynthesis. Functionally, trans-enoyl reductase; part of the gene cluster that mediates the biosynthesis of pyrrocidines, fungal natural products containing a macrocyclic para-cyclophane connected to a decahydrofluorene ring system that show potent antibiotic activities toward Gram-negative bacteria. Within the pathway, the PKS-NRPS pydA, with the help of the trans-enoyl reductase pydC, synthesize the polyketide-tyrosyl acyl thioester product which can be reductively off-loaded by the terminal reductase (R) domain in pydA. The PKS module of pydA acts in combination with the trans-acting enoyl reductase pydC to produce a methylated polyketide attached to the ACP domain. In parallel, the adenylation (A) domain of the NRPS module activated L-tyrosine, which is then transferred to the ACP domain. The condensation (C) domain subsequently link this group to the polyketide chain, forming an enzyme-bound amide. The alpha/beta hydrolase pydG is then required to catalyze the subsequent Knoevenagel condensation that affords the 3-pyrrolin-2-one ring, whereas the four proteins pydB, pydE, pydX and pydZ then function synergistically to form the cyclophane. PydB and the membrane-bound pydX and pydZ are lipid-binding proteins that can sequester and mold the pdyG product into the inverse S-shape. Binding of the medium chain reductase pydE to the complex would trigger the cascade oxidative cyclization. PydY is involved in the Diels-Alder cycloaddition that forms the decahydrofluorene core. Additional non-enzymatic hydroxylation yields pyrrocidine A2 which can be further reduced into pyrrocidine B by an endogenous reductase. This chain is Trans-enoyl reductase pydC, found in Acremonium sp.